Consider the following 302-residue polypeptide: Acetylglutamate kinase (302 aa).

Substrate-binding positions include 75–76, Arg97, and Asn198; that span reads GG.

The protein belongs to the acetylglutamate kinase family. ArgB subfamily.

The protein localises to the cytoplasm. It catalyses the reaction N-acetyl-L-glutamate + ATP = N-acetyl-L-glutamyl 5-phosphate + ADP. It participates in amino-acid biosynthesis; L-arginine biosynthesis; N(2)-acetyl-L-ornithine from L-glutamate: step 2/4. Functionally, catalyzes the ATP-dependent phosphorylation of N-acetyl-L-glutamate. This Leifsonia xyli subsp. xyli (strain CTCB07) protein is Acetylglutamate kinase.